The following is a 156-amino-acid chain: Putative NrdI-like protein (156 aa).

The polypeptide is Putative NrdI-like protein (Streptococcus pneumoniae (strain ATCC BAA-255 / R6)).